The sequence spans 115 residues: MPVTQEEIIAGIAEIIEEVTGIEPSEITPEKSFVDDLDIDSLSMVEIAVQTEDKYGVKIPDEDLAGLRTVGDVVAYIQKLEEENPEAAQALRAKIESENPDAVANVQARLEAESK.

The 79-residue stretch at 3-81 (VTQEEIIAGI…DVVAYIQKLE (79 aa)) folds into the Carrier domain. Ser41 is modified (O-(pantetheine 4'-phosphoryl)serine).

It belongs to the acyl carrier protein (ACP) family. In terms of processing, 4'-phosphopantetheine is transferred from CoA to a specific serine of apo-AcpM.

Its subcellular location is the cytoplasm. Its function is as follows. Acyl carrier protein involved in meromycolate extension. This chain is Meromycolate extension acyl carrier protein (acpM), found in Mycobacterium bovis (strain ATCC BAA-935 / AF2122/97).